Consider the following 802-residue polypeptide: Copal-8-ol diphosphate hydratase, chloroplastic (802 aa).

The transit peptide at Met1–Ser24 directs the protein to the chloroplast. Lys249 contributes to the substrate binding site. Mg(2+) contacts are provided by Asp382 and Asp384. A DXDD motif motif is present at residues Asp382–Asp385. Residue Lys468 coordinates substrate.

Belongs to the terpene synthase family. Mg(2+) serves as cofactor. Expressed specifically in the secretory cells of the glandular trichomes.

It is found in the plastid. Its subcellular location is the chloroplast. The catalysed reaction is (2E,6E,10E)-geranylgeranyl diphosphate + H2O = 8-hydroxycopalyl diphosphate. Its pathway is secondary metabolite biosynthesis; terpenoid biosynthesis. Class-II terpene synthase that synthesizes 8-hydroxy-copalyl diphosphate. Involved in the biosynthesis of cis-abienol, a labdane diterpene that can be used as synthesis precursor of ambergris substitution fragance products. In Nicotiana tabacum (Common tobacco), this protein is Copal-8-ol diphosphate hydratase, chloroplastic.